Reading from the N-terminus, the 138-residue chain is Large ribosomal subunit protein uL16 (138 aa).

Over residues 1 to 13 (MLQPKRRKYRKEQ) the composition is skewed to basic residues. The disordered stretch occupies residues 1 to 24 (MLQPKRRKYRKEQKGRNTGKATRG).

This sequence belongs to the universal ribosomal protein uL16 family. In terms of assembly, part of the 50S ribosomal subunit.

Its function is as follows. Binds 23S rRNA and is also seen to make contacts with the A and possibly P site tRNAs. The polypeptide is Large ribosomal subunit protein uL16 (Burkholderia lata (strain ATCC 17760 / DSM 23089 / LMG 22485 / NCIMB 9086 / R18194 / 383)).